A 689-amino-acid polypeptide reads, in one-letter code: Glycine--tRNA ligase beta subunit (689 aa).

Belongs to the class-II aminoacyl-tRNA synthetase family. As to quaternary structure, tetramer of two alpha and two beta subunits.

It is found in the cytoplasm. The catalysed reaction is tRNA(Gly) + glycine + ATP = glycyl-tRNA(Gly) + AMP + diphosphate. In Acinetobacter baumannii (strain ACICU), this protein is Glycine--tRNA ligase beta subunit.